A 253-amino-acid polypeptide reads, in one-letter code: Ribonuclease PH (253 aa).

Phosphate contacts are provided by residues arginine 86 and 124 to 126; that span reads GTR.

The protein belongs to the RNase PH family. As to quaternary structure, homohexameric ring arranged as a trimer of dimers.

The enzyme catalyses tRNA(n+1) + phosphate = tRNA(n) + a ribonucleoside 5'-diphosphate. Functionally, phosphorolytic 3'-5' exoribonuclease that plays an important role in tRNA 3'-end maturation. Removes nucleotide residues following the 3'-CCA terminus of tRNAs; can also add nucleotides to the ends of RNA molecules by using nucleoside diphosphates as substrates, but this may not be physiologically important. Probably plays a role in initiation of 16S rRNA degradation (leading to ribosome degradation) during starvation. This chain is Ribonuclease PH, found in Brevibacillus brevis (strain 47 / JCM 6285 / NBRC 100599).